The chain runs to 298 residues: Oxidoreductase YdhF (298 aa).

Catalysis depends on tyrosine 55, which acts as the Proton donor. Residues 158-159 (SN), 209-220 (WSCLGGGRLFND), and 263-264 (SG) contribute to the NADP(+) site.

Belongs to the aldo/keto reductase family. Aldo/keto reductase 2 subfamily.

Functionally, may function as oxidoreductase. This chain is Oxidoreductase YdhF (ydhF), found in Escherichia coli (strain K12).